A 216-amino-acid polypeptide reads, in one-letter code: MPWSTLLAEEKQKPYFQQLWQRVEQARQETVVYPPKEDVFNALKLTDPENIKVVILGQDPYHGPGQAHGLSFSVPEGVKFPPSLRNMFKAIAIDYPDTVLPQHGDLTSWAEQGVLLLNTVLTVEQGNAHSHASWGWETFTDTVISKVSDATDHVVFLLWGSHAQKKIPLIDGNKHCILTAPHPSPLSAHRGFFDANHFRKTNDYLQQHGRQPIRWV.

D59 (proton acceptor) is an active-site residue.

Belongs to the uracil-DNA glycosylase (UDG) superfamily. UNG family.

Its subcellular location is the cytoplasm. It catalyses the reaction Hydrolyzes single-stranded DNA or mismatched double-stranded DNA and polynucleotides, releasing free uracil.. Excises uracil residues from the DNA which can arise as a result of misincorporation of dUMP residues by DNA polymerase or due to deamination of cytosine. This Idiomarina loihiensis (strain ATCC BAA-735 / DSM 15497 / L2-TR) protein is Uracil-DNA glycosylase.